The sequence spans 71 residues: Virion membrane protein A13 homolog (71 aa).

A helical transmembrane segment spans residues 1 to 21; sequence MGIIDTFVITAVTVIIFCLLI. The Virion surface segment spans residues 22-70; it reads YAAYKRYKCIPSPDDRDKVLKSTLNDDTLFNQTLTPDQVKALHRLVTSS.

This sequence belongs to the chordopoxvirinae A13 family.

The protein resides in the virion membrane. Functionally, essential for the encapsidation of DNA into immature virions (IV) and the subsequent maturation of IV into mature virions (MV). The polypeptide is Virion membrane protein A13 homolog (Vertebrata (FPV)).